We begin with the raw amino-acid sequence, 146 residues long: MDPALRSYHQRLRLYTPIARGVNLAARSPPLVREARAVVTPRPPIRPSSGKASSDDADVGDELIAIADARGDPPETLPPGAGGAAPACRRPPRGGSPAAFPVALHAVDAPSQFVTWLAVRWLRGAVGLGAVLCGIAFYVTSIARGA.

The disordered stretch occupies residues 63-93 (LIAIADARGDPPETLPPGAGGAAPACRRPPR). Positions 84 to 93 (AAPACRRPPR) are enriched in low complexity.

It belongs to the HHV-1 US8.5 protein family. In terms of processing, phosphorylated.

The protein resides in the host nucleus. It is found in the host nucleolus. The protein is Protein US8.5 of Human herpesvirus 2 (strain HG52) (HHV-2).